The sequence spans 188 residues: UPF0301 protein MCA2336 2 (188 aa).

It belongs to the UPF0301 (AlgH) family.

The sequence is that of UPF0301 protein MCA2336 2 from Methylococcus capsulatus (strain ATCC 33009 / NCIMB 11132 / Bath).